The sequence spans 414 residues: Glucose-6-phosphate isomerase (414 aa).

Glu266 acts as the Proton donor in catalysis. Residues His292 and Lys405 contribute to the active site.

Belongs to the GPI family.

The protein resides in the cytoplasm. The enzyme catalyses alpha-D-glucose 6-phosphate = beta-D-fructose 6-phosphate. It participates in carbohydrate biosynthesis; gluconeogenesis. Its pathway is carbohydrate degradation; glycolysis; D-glyceraldehyde 3-phosphate and glycerone phosphate from D-glucose: step 2/4. In terms of biological role, catalyzes the reversible isomerization of glucose-6-phosphate to fructose-6-phosphate. This is Glucose-6-phosphate isomerase from Thermus thermophilus (strain ATCC BAA-163 / DSM 7039 / HB27).